Consider the following 210-residue polypeptide: Glutathione S-transferase P (210 aa).

The 80-residue stretch at 2–81 (PPYTIVYFPV…HLGRSLGLYG (80 aa)) folds into the GST N-terminal domain. Position 4 is a phosphotyrosine; by EGFR (Tyr-4). Glutathione contacts are provided by residues Tyr-8, Arg-14, Trp-39, Lys-45, 52–53 (QL), and 65–66 (QS). The region spanning 83–204 (DQKEAALVDM…SSPDHVNRPI (122 aa)) is the GST C-terminal domain. Residues Lys-103 and Lys-116 each carry the N6-succinyllysine modification. Lys-128 carries the post-translational modification N6-acetyllysine.

The protein belongs to the GST superfamily. Pi family. As to quaternary structure, homodimer. Interacts with CDK5.

It is found in the cytoplasm. Its subcellular location is the mitochondrion. The protein localises to the nucleus. The enzyme catalyses RX + glutathione = an S-substituted glutathione + a halide anion + H(+). It catalyses the reaction prostaglandin J2 + glutathione = prostaglandin J2-S-(R)-glutathione. The catalysed reaction is prostaglandin J2 + glutathione = prostaglandin J2-S-(S)-glutathione. It carries out the reaction prostaglandin A2 + glutathione = prostaglandin A2-S-(S)-glutathione. The enzyme catalyses 11(S)-hydroxy-14(S),15(S)-epoxy-(5Z,8Z,12E)-eicosatrienoate + glutathione = (11S,15S)-dihydroxy-14(R)-S-glutathionyl-(5Z,8Z,12E)-eicosatrienoate. Its function is as follows. Conjugation of reduced glutathione to a wide number of exogenous and endogenous hydrophobic electrophiles. Involved in the formation of glutathione conjugates of both prostaglandin A2 (PGA2) and prostaglandin J2 (PGJ2). Participates in the formation of novel hepoxilin regioisomers. Negatively regulates CDK5 activity via p25/p35 translocation to prevent neurodegeneration. This chain is Glutathione S-transferase P (GSTP1), found in Mesocricetus auratus (Golden hamster).